The following is an 843-amino-acid chain: Glycogen phosphorylase, brain form (843 aa).

At Ala2 the chain carries N-acetylalanine. At Ser15 the chain carries Phosphoserine; by PHK; in form phosphorylase A. Positions 43, 197, and 310 each coordinate AMP. Tyr197 is subject to Phosphotyrosine. Phosphotyrosine is present on Tyr473. Position 569 (Lys569) interacts with pyridoxal 5'-phosphate. Residues 677–678 (TG) form a pyridoxal 5'-phosphate region. Lys681 is modified (N6-(pyridoxal phosphate)lysine).

Belongs to the glycogen phosphorylase family. Homodimer. Dimers associate into a tetramer to form the enzymatically active phosphorylase A. It depends on pyridoxal 5'-phosphate as a cofactor. In terms of processing, phosphorylation of Ser-15 converts phosphorylase B (unphosphorylated) to phosphorylase A.

The catalysed reaction is [(1-&gt;4)-alpha-D-glucosyl](n) + phosphate = [(1-&gt;4)-alpha-D-glucosyl](n-1) + alpha-D-glucose 1-phosphate. Its activity is regulated as follows. Activity of phosphorylase is controlled both by allosteric means (through the non-covalent binding of metabolites) and by covalent modification. Thus AMP allosterically activates, whereas ATP, ADP, and glucose-6-phosphate allosterically inhibit, phosphorylase B. Functionally, glycogen phosphorylase that regulates glycogen mobilization. Phosphorylase is an important allosteric enzyme in carbohydrate metabolism. Enzymes from different sources differ in their regulatory mechanisms and in their natural substrates. However, all known phosphorylases share catalytic and structural properties. The protein is Glycogen phosphorylase, brain form (PYGB) of Ovis aries (Sheep).